Reading from the N-terminus, the 489-residue chain is Glutamate--tRNA ligase (489 aa).

The 'HIGH' region motif lies at 12 to 22 (PSPTGIPHVGM). A 'KMSKS' region motif is present at residues 256–260 (KLSKR). Lys-259 provides a ligand contact to ATP.

It belongs to the class-I aminoacyl-tRNA synthetase family. Glutamate--tRNA ligase type 1 subfamily. In terms of assembly, monomer.

The protein localises to the cytoplasm. It carries out the reaction tRNA(Glu) + L-glutamate + ATP = L-glutamyl-tRNA(Glu) + AMP + diphosphate. Its function is as follows. Catalyzes the attachment of glutamate to tRNA(Glu) in a two-step reaction: glutamate is first activated by ATP to form Glu-AMP and then transferred to the acceptor end of tRNA(Glu). This Mycobacterium marinum (strain ATCC BAA-535 / M) protein is Glutamate--tRNA ligase.